We begin with the raw amino-acid sequence, 2615 residues long: Probable serine/threonine-protein kinase roco7 (2615 aa).

The span at 1–13 shows a compositional bias: low complexity; it reads MDGYSSLSSSGNS. Disordered regions lie at residues 1-35, 275-297, 533-623, and 946-998; these read MDGY…NYNQ, STPT…NSNN, QNIN…GGLN, and SSSS…ISEQ. Low complexity-rich tracts occupy residues 533–560, 567–614, and 946–996; these read QNIN…SSRS, NSST…NNNN, and SSSS…SNIS. The COR domain occupies 1441–1631; that stretch reads SVKEAYARNK…LCIWQNGMVL (191 aa). Positions 1775 to 2042 constitute a Protein kinase domain; that stretch reads LKFGPQLGSG…ERLSTMQKTF (268 aa). ATP contacts are provided by residues 1781 to 1789 and Lys1802; that span reads LGSGSYANV. The active-site Proton acceptor is the Asp1899. Disordered stretches follow at residues 2061–2158 and 2176–2209; these read QINQ…SHSG and GIGS…YESG. Composition is skewed to low complexity over residues 2073-2158 and 2182-2209; these read SQAA…SHSG and NQHQ…YESG. WD repeat units lie at residues 2491–2527 and 2533–2574; these read GIIK…LVWD and RMVQ…TTYS.

Belongs to the protein kinase superfamily. TKL Ser/Thr protein kinase family. ROCO subfamily.

The catalysed reaction is L-seryl-[protein] + ATP = O-phospho-L-seryl-[protein] + ADP + H(+). The enzyme catalyses L-threonyl-[protein] + ATP = O-phospho-L-threonyl-[protein] + ADP + H(+). The polypeptide is Probable serine/threonine-protein kinase roco7 (roco7) (Dictyostelium discoideum (Social amoeba)).